A 444-amino-acid chain; its full sequence is Glutamyl-tRNA reductase (444 aa).

Substrate contacts are provided by residues 49–52 (TCNR), Ser109, 114–116 (ETQ), and Gln120. Cys50 (nucleophile) is an active-site residue. 189-194 (GAGKMG) lines the NADP(+) pocket.

This sequence belongs to the glutamyl-tRNA reductase family. Homodimer.

It carries out the reaction (S)-4-amino-5-oxopentanoate + tRNA(Glu) + NADP(+) = L-glutamyl-tRNA(Glu) + NADPH + H(+). Its pathway is porphyrin-containing compound metabolism; protoporphyrin-IX biosynthesis; 5-aminolevulinate from L-glutamyl-tRNA(Glu): step 1/2. Its function is as follows. Catalyzes the NADPH-dependent reduction of glutamyl-tRNA(Glu) to glutamate 1-semialdehyde (GSA). In Bacillus anthracis (strain A0248), this protein is Glutamyl-tRNA reductase.